Here is a 295-residue protein sequence, read N- to C-terminus: Porphobilinogen deaminase (295 aa).

The residue at position 241 (C241) is an S-(dipyrrolylmethanemethyl)cysteine.

It belongs to the HMBS family. As to quaternary structure, monomer. The cofactor is dipyrromethane.

The enzyme catalyses 4 porphobilinogen + H2O = hydroxymethylbilane + 4 NH4(+). Its pathway is porphyrin-containing compound metabolism; protoporphyrin-IX biosynthesis; coproporphyrinogen-III from 5-aminolevulinate: step 2/4. In terms of biological role, tetrapolymerization of the monopyrrole PBG into the hydroxymethylbilane pre-uroporphyrinogen in several discrete steps. The protein is Porphobilinogen deaminase of Lachnospira eligens (strain ATCC 27750 / DSM 3376 / VPI C15-48 / C15-B4) (Eubacterium eligens).